Here is a 502-residue protein sequence, read N- to C-terminus: Histidine--tRNA ligase (502 aa).

The protein belongs to the class-II aminoacyl-tRNA synthetase family. As to quaternary structure, homodimer.

Its subcellular location is the cytoplasm. It carries out the reaction tRNA(His) + L-histidine + ATP = L-histidyl-tRNA(His) + AMP + diphosphate + H(+). In Brucella abortus (strain S19), this protein is Histidine--tRNA ligase.